The following is a 319-amino-acid chain: Acetyl-coenzyme A carboxylase carboxyl transferase subunit alpha (319 aa).

The CoA carboxyltransferase C-terminal domain maps to 38 to 292 (ALDKKAETLL…GKAIEMMLKE (255 aa)).

Belongs to the AccA family. As to quaternary structure, acetyl-CoA carboxylase is a heterohexamer composed of biotin carboxyl carrier protein (AccB), biotin carboxylase (AccC) and two subunits each of ACCase subunit alpha (AccA) and ACCase subunit beta (AccD).

It is found in the cytoplasm. It carries out the reaction N(6)-carboxybiotinyl-L-lysyl-[protein] + acetyl-CoA = N(6)-biotinyl-L-lysyl-[protein] + malonyl-CoA. The protein operates within lipid metabolism; malonyl-CoA biosynthesis; malonyl-CoA from acetyl-CoA: step 1/1. Its function is as follows. Component of the acetyl coenzyme A carboxylase (ACC) complex. First, biotin carboxylase catalyzes the carboxylation of biotin on its carrier protein (BCCP) and then the CO(2) group is transferred by the carboxyltransferase to acetyl-CoA to form malonyl-CoA. The sequence is that of Acetyl-coenzyme A carboxylase carboxyl transferase subunit alpha from Cereibacter sphaeroides (strain ATCC 17029 / ATH 2.4.9) (Rhodobacter sphaeroides).